The sequence spans 236 residues: Uridylate kinase (236 aa).

Position 10–13 (10–13) interacts with ATP; sequence KLSG. Gly52 is a binding site for UMP. Gly53 and Arg57 together coordinate ATP. Residues Asp72 and 133–140 contribute to the UMP site; that span reads TGNPFFTT. Residues Thr160, Tyr166, and Asp169 each contribute to the ATP site.

The protein belongs to the UMP kinase family. In terms of assembly, homohexamer.

It localises to the cytoplasm. The catalysed reaction is UMP + ATP = UDP + ADP. Its pathway is pyrimidine metabolism; CTP biosynthesis via de novo pathway; UDP from UMP (UMPK route): step 1/1. Inhibited by UTP. Functionally, catalyzes the reversible phosphorylation of UMP to UDP. This Bacteroides fragilis (strain ATCC 25285 / DSM 2151 / CCUG 4856 / JCM 11019 / LMG 10263 / NCTC 9343 / Onslow / VPI 2553 / EN-2) protein is Uridylate kinase.